The following is a 471-amino-acid chain: CGKSYEEEEEEEDDELEADVAQNLSSKRSARQLDADMENEVLNLARSVSPAAKRLALEHTAEPALAAQSAAAATPPVGLSLPPTAPLGFGPEDMQQALQLQLHSYIEMVRQLAPDAFPNPNLATQFLLQNSLQALAQFQALQQLKQQRDQQLPTASEQLPTRHYSTPLSKSPLRSPSLSPVARSMEPQQAQRTPPNSLAAAGLGLSSAVLTPNTPSMQQQQQQTMTSTTNASSTPKPLASGATVAAVMATKLEQSPEETTDLEELEQFAKTFKQRRIKLGFTQGDVGLAMGKLYGNDFSQTTISRFEALNLSFKNMCKLKPLLQKWLEDADSSVAKSAGGVFNINTMTTNLSSTPESILGRRRKKRTSIETTIRGALEQAFVLNCKPTSEEINQLSERLHMDKEVVRVWFCNRRQKEKRINPSLDLDSPTGTPLSSHAFGYPPQALNMSNGGHVLLEAGGSHCGSSISSGE.

Residues Cys-1–Ala-18 show a composition bias toward acidic residues. 2 disordered regions span residues Cys-1 to Gln-32 and Asp-149 to Leu-238. Positions Ser-165–Pro-180 are enriched in low complexity. A compositionally biased stretch (polar residues) spans Glu-186–Asn-196. Over residues Ser-197–Asn-230 the composition is skewed to low complexity. Positions Glu-257–Asp-331 constitute a POU-specific domain. The homeobox DNA-binding region spans Arg-362–Asn-421.

The protein belongs to the POU transcription factor family. Class-2 subfamily.

It is found in the nucleus. Functionally, DNA-binding regulatory protein implicated in early development. Involved in neuronal cell fate decision. May act as an octamer-dependent activator of transcription. The chain is POU domain protein 2 (pdm2) from Drosophila virilis (Fruit fly).